Reading from the N-terminus, the 272-residue chain is Probable proteasome subunit alpha type-6 (272 aa).

The span at 243–261 (AARASRAAAEEPQAPTAEA) shows a compositional bias: low complexity. Residues 243–272 (AARASRAAAEEPQAPTAEAILDSADAMETD) are disordered.

This sequence belongs to the peptidase T1A family. As to quaternary structure, the 26S proteasome consists of a 20S proteasome core and two 19S regulatory subunits. The 20S proteasome core is composed of 28 subunits that are arranged in four stacked rings, resulting in a barrel-shaped structure. The two end rings are each formed by seven alpha subunits, and the two central rings are each formed by seven beta subunits. The catalytic chamber with the active sites is on the inside of the barrel.

Its subcellular location is the cytoplasm. It localises to the nucleus. In terms of biological role, the proteasome is a multicatalytic proteinase complex which is characterized by its ability to cleave peptides with Arg, Phe, Tyr, Leu, and Glu adjacent to the leaving group at neutral or slightly basic pH. The proteasome has an ATP-dependent proteolytic activity. This chain is Probable proteasome subunit alpha type-6, found in Schizosaccharomyces pombe (strain 972 / ATCC 24843) (Fission yeast).